Consider the following 192-residue polypeptide: ADP-ribosylation factor-like protein 14 (192 aa).

Gly2 carries the N-myristoyl glycine lipid modification. GTP contacts are provided by residues 20–27, 64–68, and 124–127; these read GLDSAGKS, DVGGQ, and NKQD.

The protein belongs to the small GTPase superfamily. Arf family. In terms of assembly, interacts with ARL14EP.

Its subcellular location is the cytoplasmic vesicle. Functionally, GTPase that recruits MYO1E to MHC class II-containing vesicles via the effector protein ARL14EP and hence controls the movement of these vesicles along the actin cytoskeleton in dendritic cells. This Mus musculus (Mouse) protein is ADP-ribosylation factor-like protein 14 (Arl14).